Here is a 292-residue protein sequence, read N- to C-terminus: Ribosomal protein L11 methyltransferase (292 aa).

Positions 144, 165, 187, and 229 each coordinate S-adenosyl-L-methionine.

It belongs to the methyltransferase superfamily. PrmA family.

It localises to the cytoplasm. The catalysed reaction is L-lysyl-[protein] + 3 S-adenosyl-L-methionine = N(6),N(6),N(6)-trimethyl-L-lysyl-[protein] + 3 S-adenosyl-L-homocysteine + 3 H(+). In terms of biological role, methylates ribosomal protein L11. The protein is Ribosomal protein L11 methyltransferase of Pseudomonas putida (strain W619).